Reading from the N-terminus, the 546-residue chain is Membrane protein insertase YidC (546 aa).

Residues 8 to 28 form a helical membrane-spanning segment; that stretch reads ILLATVLSVGILILWQVIFPT. The interval 31-70 is disordered; it reads APPKPAHPPAAEVAKPAAPASPAPGAAAPAVPAPPPDAPE. Residues 39 to 60 are compositionally biased toward low complexity; it reads PAAEVAKPAAPASPAPGAAAPA. The next 5 membrane-spanning stretches (helical) occupy residues 326-346, 356-376, 422-442, 459-479, and 498-518; these read IDYGAVAKFFALFARGLLYVM, WGVAIILLTVLVRLVLFPLTY, LGGCLPMLLQMPVWFALYAAL, LTAHDPYFILPIAMGISSFVM, and FFPGFFTVIMLFVPGGLTLYI.

It belongs to the OXA1/ALB3/YidC family. Type 1 subfamily. As to quaternary structure, interacts with the Sec translocase complex via SecD. Specifically interacts with transmembrane segments of nascent integral membrane proteins during membrane integration.

The protein localises to the cell inner membrane. Required for the insertion and/or proper folding and/or complex formation of integral membrane proteins into the membrane. Involved in integration of membrane proteins that insert both dependently and independently of the Sec translocase complex, as well as at least some lipoproteins. Aids folding of multispanning membrane proteins. This is Membrane protein insertase YidC from Anaeromyxobacter dehalogenans (strain 2CP-1 / ATCC BAA-258).